A 438-amino-acid polypeptide reads, in one-letter code: Alpha-methylserine aldolase (438 aa).

Lys252 bears the N6-(pyridoxal phosphate)lysine mark.

It belongs to the SHMT family. Alpha-methylserine aldolase subfamily. Homodimer. Pyridoxal 5'-phosphate is required as a cofactor.

It catalyses the reaction 2-methyl-L-serine = formaldehyde + L-alanine. In the alpha-methyl-L-serine synthesis reaction, activity is inhibited by an excess amount of formaldehyde (at a concentration greater than 10 mM). Catalyzes the reversible interconversion of alpha-methyl-L-serine to L-alanine and formaldehyde. Cannot use alpha-methyl-D-serine, L-serine or D-serine. Cannot use D-alanine instead of L-alanine as the substrate for alpha-methyl-L-serine synthesis. Does not require tetrahydrofolate (THF) for activity. This Ralstonia sp protein is Alpha-methylserine aldolase.